A 550-amino-acid chain; its full sequence is MVRDSFDGGHTGDPERDLAYEREHVRRDTMSDEVVPDDVAQYLIYFKRMIDEENVVEIHNLYEHGFPDLTERYFQQRLWPNEEAVENIVGSGNRIVAFSDSRIFIILYKELYFRHVYTRMQRGPSLAHRFDSYQNYQELFCEVLTPEKQPLSLQLPNVWLWDIIDEFVYQPFCLYKANPGKRSPEEYEDLLSIEQNQSAWNIYPVLNILYSLLAKSQIDEQLLAIREGRNPDDVADDFGRSALYFKLGYFSLIGLLRTHVLLGDYHQALKTVENLELDPKGLYNTVPSCLVTFHYFVGFSHMMMRNYGEATKIFVNCLLYIQRTKSVQQQNQQQKKNFQYDVIGKTNEQLYHLLAICLTLQPQRIDDSIQSQLYERTGERMNHMSNGNIDEFRLAFQQGCPKFLSPTTVVYEGPNQAKEPLLRQCNAFLEEIESQIMLPILRGYLKLYTTLPTRKLASFMDVSDADYDSFVGKLLSFKMIVNELGKECMDRCEIDDSTTDLDFYVDKDMIIIADTKVARRIGEYFIKQIQKLQEVNRKLKELPVIPAVSS.

Positions 1–20 (MVRDSFDGGHTGDPERDLAY) are disordered. The region spanning 309-503 (EATKIFVNCL…IDDSTTDLDF (195 aa)) is the PCI domain.

The protein belongs to the eIF-3 subunit L family. As to quaternary structure, component of the eukaryotic translation initiation factor 3 (eIF-3) complex.

The protein localises to the cytoplasm. Functionally, component of the eukaryotic translation initiation factor 3 (eIF-3) complex, which is involved in protein synthesis of a specialized repertoire of mRNAs and, together with other initiation factors, stimulates binding of mRNA and methionyl-tRNAi to the 40S ribosome. The eIF-3 complex specifically targets and initiates translation of a subset of mRNAs involved in cell proliferation. The polypeptide is Eukaryotic translation initiation factor 3 subunit L (Brugia malayi (Filarial nematode worm)).